A 266-amino-acid chain; its full sequence is 22 kDa alpha-zein 8 (266 aa).

Positions 1–21 are cleaved as a signal peptide; the sequence is MATKILALLALLALFVSATNA.

Belongs to the zein family.

In terms of biological role, zeins are major seed storage proteins. This is 22 kDa alpha-zein 8 from Zea mays (Maize).